The following is a 608-amino-acid chain: Membrane protein insertase YidC (608 aa).

The helical transmembrane segment at 8–28 (LLLATALSFLVILGWYFFFPP) threads the bilayer. Positions 33 to 61 (PQPATEVTETAPQGDTTAPAAAPSAGAAT) are disordered. Transmembrane regions (helical) follow at residues 378-398 (MGVA…PLAY), 448-468 (LPIL…FVTL), 482-502 (LSVP…WAAP), 506-526 (SLLS…SMWV), and 542-562 (IFAW…SGLV).

It belongs to the OXA1/ALB3/YidC family. Type 1 subfamily. In terms of assembly, interacts with the Sec translocase complex via SecD. Specifically interacts with transmembrane segments of nascent integral membrane proteins during membrane integration.

It is found in the cell inner membrane. Its function is as follows. Required for the insertion and/or proper folding and/or complex formation of integral membrane proteins into the membrane. Involved in integration of membrane proteins that insert both dependently and independently of the Sec translocase complex, as well as at least some lipoproteins. Aids folding of multispanning membrane proteins. The protein is Membrane protein insertase YidC of Ruegeria sp. (strain TM1040) (Silicibacter sp.).